We begin with the raw amino-acid sequence, 289 residues long: Acetyl-coenzyme A carboxylase carboxyl transferase subunit beta (289 aa).

Residues 28 to 289 (LWSKCPSCEA…ALLQKLPAAA (262 aa)) enclose the CoA carboxyltransferase N-terminal domain. Zn(2+) is bound by residues cysteine 32, cysteine 35, cysteine 51, and cysteine 54. The C4-type zinc-finger motif lies at 32 to 54 (CPSCEAVLYATDLENNLQVCPKC).

It belongs to the AccD/PCCB family. Acetyl-CoA carboxylase is a heterohexamer composed of biotin carboxyl carrier protein (AccB), biotin carboxylase (AccC) and two subunits each of ACCase subunit alpha (AccA) and ACCase subunit beta (AccD). Zn(2+) is required as a cofactor.

Its subcellular location is the cytoplasm. It catalyses the reaction N(6)-carboxybiotinyl-L-lysyl-[protein] + acetyl-CoA = N(6)-biotinyl-L-lysyl-[protein] + malonyl-CoA. Its pathway is lipid metabolism; malonyl-CoA biosynthesis; malonyl-CoA from acetyl-CoA: step 1/1. Functionally, component of the acetyl coenzyme A carboxylase (ACC) complex. Biotin carboxylase (BC) catalyzes the carboxylation of biotin on its carrier protein (BCCP) and then the CO(2) group is transferred by the transcarboxylase to acetyl-CoA to form malonyl-CoA. The polypeptide is Acetyl-coenzyme A carboxylase carboxyl transferase subunit beta (Dechloromonas aromatica (strain RCB)).